The following is a 275-amino-acid chain: MTQALQALIDQAWEDRTSLSPKSAPNDIREAVANVIGQLDAGTLRVAEKQGKDWIVNQWVKKAVLLSFRLEDNAPMSAGGFAQFYDKVPTKFANWSGDDFAKAGFRVVPPAVARRGSFIAKNAVLMPSYVNIGAYVDEGTMVDTWATVGSCAQIGKNVHLSGGVGIGGVLEPLQANPVIIEDNCFIGARSEVVEGVIVEENSVISMGVYLGQSTKIYDRETGEIHYGRVPAGSVVVAGNLPSKDGKYSLYCAVIVKKVDAQTRAKTSLNDLLRGD.

Belongs to the transferase hexapeptide repeat family.

It localises to the cytoplasm. The catalysed reaction is (S)-2,3,4,5-tetrahydrodipicolinate + succinyl-CoA + H2O = (S)-2-succinylamino-6-oxoheptanedioate + CoA. It participates in amino-acid biosynthesis; L-lysine biosynthesis via DAP pathway; LL-2,6-diaminopimelate from (S)-tetrahydrodipicolinate (succinylase route): step 1/3. The protein is 2,3,4,5-tetrahydropyridine-2,6-dicarboxylate N-succinyltransferase of Cupriavidus taiwanensis (strain DSM 17343 / BCRC 17206 / CCUG 44338 / CIP 107171 / LMG 19424 / R1) (Ralstonia taiwanensis (strain LMG 19424)).